The following is a 230-amino-acid chain: Germin-like protein 5-1 (230 aa).

An N-terminal signal peptide occupies residues 1–20 (MAMVGRSLLLLLLLVTLAAG). Residues Cys38 and Cys53 are joined by a disulfide bond. The 134-residue stretch at 86-219 (YGFTARSVDI…TLLTDEATVD (134 aa)) folds into the Cupin type-1 domain. His119, His121, Glu126, and His167 together coordinate Mn(2+). N-linked (GlcNAc...) asparagine glycosylation is present at Asn172.

This sequence belongs to the germin family. In terms of assembly, oligomer (believed to be a pentamer but probably hexamer).

Its subcellular location is the secreted. It is found in the extracellular space. The protein resides in the apoplast. May play a role in plant defense. Probably has no oxalate oxidase activity even if the active site is conserved. The sequence is that of Germin-like protein 5-1 from Oryza sativa subsp. japonica (Rice).